Here is a 37-residue protein sequence, read N- to C-terminus: Large ribosomal subunit protein bL36c (37 aa).

This sequence belongs to the bacterial ribosomal protein bL36 family.

It is found in the plastid. Its subcellular location is the chloroplast. The sequence is that of Large ribosomal subunit protein bL36c from Phaseolus angularis (Azuki bean).